A 245-amino-acid polypeptide reads, in one-letter code: Anti-Pycsar protein Apyc1 (245 aa).

Positions 19 to 219 are beta-lactamase-like; that stretch reads FNNNALLYAG…EIQSQILLKH (201 aa). Zn(2+)-binding residues include His-61, His-63, Asp-65, His-66, His-145, Asp-165, and His-219.

It belongs to the anti-Pycsar protein Apyc1 family. Homodimer. It depends on Zn(2+) as a cofactor.

It catalyses the reaction 3',5'-cyclic CMP + H2O = CMP + H(+). It carries out the reaction 3',5'-cyclic UMP + H2O = UMP + H(+). Its function is as follows. Counteracts the endogenous Pycsar antiviral defense system. Phosphodiesterase that enables metal-dependent hydrolysis of host cyclic nucleotide Pycsar defense signals such as cCMP and cUMP. The sequence is that of Anti-Pycsar protein Apyc1 from Paenibacillus sp. (strain J14).